Here is a 206-residue protein sequence, read N- to C-terminus: dCTP deaminase, dUMP-forming (206 aa).

Residues 117 to 122 (RSSFGR), Asp-135, 143 to 145 (TLE), Gln-163, Tyr-177, Lys-184, and Gln-188 each bind dCTP. Glu-145 functions as the Proton donor/acceptor in the catalytic mechanism.

Belongs to the dCTP deaminase family. In terms of assembly, homotrimer.

It catalyses the reaction dCTP + 2 H2O = dUMP + NH4(+) + diphosphate. It functions in the pathway pyrimidine metabolism; dUMP biosynthesis; dUMP from dCTP: step 1/1. Functionally, bifunctional enzyme that catalyzes both the deamination of dCTP to dUTP and the hydrolysis of dUTP to dUMP without releasing the toxic dUTP intermediate. This chain is dCTP deaminase, dUMP-forming, found in Methanococcus vannielii (strain ATCC 35089 / DSM 1224 / JCM 13029 / OCM 148 / SB).